The primary structure comprises 309 residues: Phytoene synthase (309 aa).

It belongs to the phytoene/squalene synthase family. ATP is required as a cofactor. Mn(2+) serves as cofactor. The cofactor is Mg(2+).

It functions in the pathway carotenoid biosynthesis; phytoene biosynthesis. Involved in the biosynthesis of carotenoids. Catalyzes the condensation of two molecules of geranylgeranyl diphosphate (GGPP) to give prephytoene diphosphate (PPPP) and the subsequent rearrangement of the cyclopropylcarbinyl intermediate to yield phytoene. In Pseudescherichia vulneris (Escherichia vulneris), this protein is Phytoene synthase (crtB).